The chain runs to 211 residues: Regulator of G-protein signaling 2 (211 aa).

Disordered stretches follow at residues 14–33 (GPMDKGAGTGPKNEEKREKM) and 49–71 (LQNSSSPGKPKTGKKSKQQTFIK). Residues 32–66 (KMKRTLLKDWKSRLSYFLQNSSSPGKPKTGKKSKQ) form a necessary for membrane association region. The tract at residues 79–116 (LWSEAFDELLASKYGLAAFRAFLKSEFCEENIEFWLAC) is necessary to inhibit protein synthesis. Positions 83–199 (AFDELLASKY…LESEFYQDLC (117 aa)) constitute an RGS domain.

In terms of assembly, interacts with GNAQ. Does not interact with GNAI1 and GNAI3. Interacts with EIF2B5. Interacts with PRKG1 (isoform alpha). Post-translationally, phosphorylated by protein kinase C. Phosphorylation by PRKG1 leads to activation of RGS2 activity.

It localises to the cell membrane. The protein resides in the cytoplasm. Its subcellular location is the nucleus. The protein localises to the nucleolus. Functionally, regulates G protein-coupled receptor signaling cascades. Inhibits signal transduction by increasing the GTPase activity of G protein alpha subunits, thereby driving them into their inactive GDP-bound form. It is involved in the negative regulation of the angiotensin-activated signaling pathway. Plays a role in the regulation of blood pressure in response to signaling via G protein-coupled receptors and GNAQ. Plays a role in regulating the constriction and relaxation of vascular smooth muscle. Binds EIF2B5 and blocks its activity, thereby inhibiting the translation of mRNA into protein. The chain is Regulator of G-protein signaling 2 (RGS2) from Bos taurus (Bovine).